A 310-amino-acid polypeptide reads, in one-letter code: MPKVRTKDVMDKFKLELISGEEGINRPITMSDLSRPGLEMAGYFTYYPKERVQLLGKTEITFFEKLPEEEKKQRMLSLCTEITPAIILSRDLPIPPELVEASEENGVPVLRSPLKTTRLTSRLTNFLESQLAPTTAIHGVLVDVYGVGVLIIGKSGVGKSETALELVKRGHRLVADDCVEIRQEDQDTLIGSAPELIEHLLEIRGLGIINVMTLFGAGAVRSFKRITLVMSLELWEQGKQYDRLGLEEETMKIIDTDVPKLTIPVRPGRNLAVIIEVAAMNFRLKRMGLNAAEQFTHKLADVIEDGELEE.

Catalysis depends on residues histidine 138 and lysine 159. 153–160 (GKSGVGKS) provides a ligand contact to ATP. Serine 160 is a binding site for Mg(2+). The active-site Proton acceptor; for phosphorylation activity. Proton donor; for dephosphorylation activity is the aspartate 177. The tract at residues 201–210 (LEIRGLGIIN) is important for the catalytic mechanism of both phosphorylation and dephosphorylation. Residue glutamate 202 coordinates Mg(2+). Arginine 243 is a catalytic residue. The interval 264–269 (PVRPGR) is important for the catalytic mechanism of dephosphorylation.

It belongs to the HPrK/P family. As to quaternary structure, homohexamer. Requires Mg(2+) as cofactor.

The catalysed reaction is [HPr protein]-L-serine + ATP = [HPr protein]-O-phospho-L-serine + ADP + H(+). It catalyses the reaction [HPr protein]-O-phospho-L-serine + phosphate + H(+) = [HPr protein]-L-serine + diphosphate. Functionally, catalyzes the ATP- as well as the pyrophosphate-dependent phosphorylation of a specific serine residue in HPr, a phosphocarrier protein of the phosphoenolpyruvate-dependent sugar phosphotransferase system (PTS). HprK/P also catalyzes the pyrophosphate-producing, inorganic phosphate-dependent dephosphorylation (phosphorolysis) of seryl-phosphorylated HPr (P-Ser-HPr). The two antagonistic activities of HprK/P are regulated by several intracellular metabolites, which change their concentration in response to the absence or presence of rapidly metabolisable carbon sources (glucose, fructose, etc.) in the growth medium. Also phosphorylates/dephosphorylates the HPr-like catabolite repression protein crh on a specific serine residue. Therefore, by controlling the phosphorylation state of HPr and crh, HPrK/P is a sensor enzyme that plays a major role in the regulation of carbon metabolism and sugar transport: it mediates carbon catabolite repression (CCR), and regulates PTS-catalyzed carbohydrate uptake and inducer exclusion. The sequence is that of HPr kinase/phosphorylase from Bacillus licheniformis (strain ATCC 14580 / DSM 13 / JCM 2505 / CCUG 7422 / NBRC 12200 / NCIMB 9375 / NCTC 10341 / NRRL NRS-1264 / Gibson 46).